The sequence spans 77 residues: Acyl carrier protein (77 aa).

The 76-residue stretch at A2 to Q77 folds into the Carrier domain. S37 carries the O-(pantetheine 4'-phosphoryl)serine modification.

Belongs to the acyl carrier protein (ACP) family. Post-translationally, 4'-phosphopantetheine is transferred from CoA to a specific serine of apo-ACP by AcpS. This modification is essential for activity because fatty acids are bound in thioester linkage to the sulfhydryl of the prosthetic group.

Its subcellular location is the cytoplasm. Its pathway is lipid metabolism; fatty acid biosynthesis. Its function is as follows. Carrier of the growing fatty acid chain in fatty acid biosynthesis. In Bacillus licheniformis (strain ATCC 14580 / DSM 13 / JCM 2505 / CCUG 7422 / NBRC 12200 / NCIMB 9375 / NCTC 10341 / NRRL NRS-1264 / Gibson 46), this protein is Acyl carrier protein.